A 400-amino-acid chain; its full sequence is Forkhead box protein A4-B (400 aa).

Positions 119 to 213 form a DNA-binding region, fork-head; it reads KPPYSYISLI…ENGCYLRRQK (95 aa). A compositionally biased stretch (basic and acidic residues) spans 218-234; the sequence is ERSKSGEGERKGNKPGD. The interval 218–290 is disordered; it reads ERSKSGEGER…VGFSPTSEQA (73 aa). Polar residues-rich tracts occupy residues 249–258 and 267–277; these read DCSSSRSPQA and STGSSIHQATG.

As to expression, primarily expressed in the dorsal blastopore lip (Spemann organizer) of early gastrulae. At later stages, expressed in the dorsal mesoderm and the neural floor plate. In the dorsal mesoderm, expressed in the notochord but not in the presomitic mesoderm. Also expressed in the mid-brain area.

The protein resides in the nucleus. Transcriptional repressor involved in embryonic nervous system development. Plays a role in the induction and patterning of the anterior-posterior neural axis. Involved in the establishment of floor plate differentiation from neural plate cells during gastrulation. Binds the anf1 promoter sequence to restrict expression of anf1 to the anterior of the neural plate, thereby patterning the forebrain. Can bind to the HNF-3-alpha DNA target sequence. Cooperates with t/bra in a dose-dependent manner to specify dorsal mesoderm formation, including notochord. May be involved in the dorso-ventral patterning of the mesoderm. Binds to DNA via the target sequence 5'-[GA]TAAA[TC]A-3', with 5'-GTAAATA-3' being the preferred binding site. The polypeptide is Forkhead box protein A4-B (foxa4-b) (Xenopus laevis (African clawed frog)).